We begin with the raw amino-acid sequence, 1326 residues long: Coiled-coil domain-containing protein 171 (1326 aa).

Coiled-coil stretches lie at residues 53–294, 323–391, 450–561, 597–630, 660–707, 765–792, 979–1143, and 1217–1241; these read TTKH…RAAH, AEAV…RLQY, SFSV…AFHK, SELC…ICKN, WHRQ…EQLV, FKLE…MKKK, FTQR…KECV, and IMTL…LHTA. The disordered stretch occupies residues 1306–1326; sequence SSHSSPVTMSANANRPTQIGL.

The chain is Coiled-coil domain-containing protein 171 (CCDC171) from Homo sapiens (Human).